The sequence spans 372 residues: Saccharopine dehydrogenase [NAD(+), L-lysine-forming] (372 aa).

Arginine 17 and lysine 76 together coordinate L-saccharopine. The Proton acceptor role is filled by lysine 76. Residue histidine 95 is the Proton donor of the active site. L-saccharopine is bound at residue glutamine 100. Arginine 129 lines the NAD(+) pocket. 2 residues coordinate L-saccharopine: arginine 130 and phenylalanine 134. Residues 202–203 (GR), aspartate 226, threonine 230, tyrosine 250, and valine 277 each bind NAD(+). A disulfide bond links cysteine 204 and cysteine 248. Residue 278 to 280 (SAD) coordinates L-saccharopine. 317–320 (IDHL) serves as a coordination point for NAD(+). The Microbody targeting signal motif lies at 370–372 (SKL).

Belongs to the AlaDH/PNT family. Monomer.

The protein localises to the peroxisome. The catalysed reaction is L-saccharopine + NAD(+) + H2O = L-lysine + 2-oxoglutarate + NADH + H(+). The protein operates within amino-acid biosynthesis; L-lysine biosynthesis via AAA pathway; L-lysine from L-alpha-aminoadipate (fungal route): step 3/3. Its function is as follows. Catalyzes the NAD(+)-dependent cleavage of saccharopine to L-lysine and 2-oxoglutarate, the final step in the alpha-aminoadipate (AAA) pathway for lysin biosynthesis. The polypeptide is Saccharopine dehydrogenase [NAD(+), L-lysine-forming] (LYS1) (Candida glabrata (strain ATCC 2001 / BCRC 20586 / JCM 3761 / NBRC 0622 / NRRL Y-65 / CBS 138) (Yeast)).